The following is a 419-amino-acid chain: eIF5-mimic protein 1 (419 aa).

The disordered stretch occupies residues 1–22 (MNKHQKPVLTGQRFKTRKRDEK). Position 117 is an N6-acetyllysine (lysine 117). The 168-residue stretch at 248-415 (VQQSLGTRKE…QNAEEESESE (168 aa)) folds into the W2 domain. Phosphoserine occurs at positions 412 and 414.

Belongs to the BZW family. In terms of assembly, interacts with EIF3E. Interacts with EIF2S2. Interacts with EIF3C.

The protein localises to the cytoplasm. Translation initiation regulator which represses non-AUG initiated translation and repeat-associated non-AUG (RAN) initiated translation by acting as a competitive inhibitor of eukaryotic translation initiation factor 5 (EIF5) function. Increases the accuracy of translation initiation by impeding EIF5-dependent translation from non-AUG codons by competing with it for interaction with EIF2S2 within the 43S pre-initiation complex (PIC) in an EIF3C-binding dependent manner. The sequence is that of eIF5-mimic protein 1 (BZW2) from Homo sapiens (Human).